The chain runs to 193 residues: p53 apoptosis effector related to PMP-22 (193 aa).

The next 4 helical transmembrane spans lie at 12–32, 79–99, 110–130, and 151–171; these read RWIL…ALAG, AMLF…FFAL, VIGG…VIYP, and WAYG…FFFC.

It belongs to the TMEM47 family. (Microbial infection) Interacts with S.typhimurium sipA and sctB1/sipC. In terms of tissue distribution, expressed in skin, heart, placental, liver, pancreas, keratinocytes and dermal fibroblasts. May translocate to the intestinal apical epithelial cell surface via sipA and sctB1/sipC-promoted exocytic translocation following infection by S. Typhimurium.

The protein localises to the cell junction. It is found in the desmosome. Its subcellular location is the cell membrane. The protein resides in the cytoplasm. In terms of biological role, component of intercellular desmosome junctions. Plays a role in stratified epithelial integrity and cell-cell adhesion by promoting desmosome assembly. Thereby plays a role in barrier function of the skin against infection. Plays a role in mammary epithelial tissue homeostasis and remodeling during and after pregnancy, potentially via its involvement in desmosome cell-cell junctions. Required for tooth enamel development via facilitating desmosome-mediated ameloblast adhesion to the stratum intermedium during the transitional stage of amelogenesis. May also play a role in downstream transcriptional regulation of other genes involved in amelogenesis such as AMBN, ENAM, MMP20 and KLK4. Plays a role as an effector in the TP53-dependent apoptotic pathway. Positively regulates apoptosis in T-helper 17 (Th17) cell populations via caspase-dependent signaling. Promotes neutrophil transepithelial migration in response to chemoattractants such as hepoxilin A3 (HXA3), N-Formylmethionyl-leucyl-phenylalanine (fMLP) and CXCL8/IL-8. Required for neutrophil transepithelial migration in response to S.typhimurium infection. May act as a positive regulator of endothelial cell apoptosis in response to blood flow-derived shear stress. This Homo sapiens (Human) protein is p53 apoptosis effector related to PMP-22.